Here is a 617-residue protein sequence, read N- to C-terminus: Dihydroxy-acid dehydratase (617 aa).

Asp-82 is a binding site for Mg(2+). Cys-123 contacts [2Fe-2S] cluster. Asp-124 and Lys-125 together coordinate Mg(2+). Lys-125 carries the N6-carboxylysine modification. A [2Fe-2S] cluster-binding site is contributed by Cys-197. Mg(2+) is bound at residue Glu-497. Ser-523 serves as the catalytic Proton acceptor.

This sequence belongs to the IlvD/Edd family. In terms of assembly, homodimer. The cofactor is [2Fe-2S] cluster. Requires Mg(2+) as cofactor.

The enzyme catalyses (2R)-2,3-dihydroxy-3-methylbutanoate = 3-methyl-2-oxobutanoate + H2O. The catalysed reaction is (2R,3R)-2,3-dihydroxy-3-methylpentanoate = (S)-3-methyl-2-oxopentanoate + H2O. It participates in amino-acid biosynthesis; L-isoleucine biosynthesis; L-isoleucine from 2-oxobutanoate: step 3/4. The protein operates within amino-acid biosynthesis; L-valine biosynthesis; L-valine from pyruvate: step 3/4. Functions in the biosynthesis of branched-chain amino acids. Catalyzes the dehydration of (2R,3R)-2,3-dihydroxy-3-methylpentanoate (2,3-dihydroxy-3-methylvalerate) into 2-oxo-3-methylpentanoate (2-oxo-3-methylvalerate) and of (2R)-2,3-dihydroxy-3-methylbutanoate (2,3-dihydroxyisovalerate) into 2-oxo-3-methylbutanoate (2-oxoisovalerate), the penultimate precursor to L-isoleucine and L-valine, respectively. This is Dihydroxy-acid dehydratase from Streptomyces avermitilis (strain ATCC 31267 / DSM 46492 / JCM 5070 / NBRC 14893 / NCIMB 12804 / NRRL 8165 / MA-4680).